A 642-amino-acid polypeptide reads, in one-letter code: MGKIIGIDLGTTNSCVAILEGDKPRVIENSEGGRTTPSIVAYTDDETLVGQSAKRQAVTNPTNTLFAIKRLIGRRFEDDVVQKDIKMVPYTIAKADNGDAWVDVKGKKMAPPQISAEVLKKMKKTAEDFLGEKVTEAVITVPAYFNDAQRQATKDAGRIAGLEVKRIINEPTAAALAYGMDKKGGDRKVAVYDLGGGTFDISIIEIADVDGEMQFEVLATNGDTFLGGEDFDLRLIDYLAQEFKKDSGIDLKGDPLAMQRLKEAAEKAKIELSSSQQTDVNLPYITADASGPKHLNVKVTRAKLESLVEELVERSLEPCRIALKDSGCSSSEIDEVILVGGQTRMPLVQSKVADFFGKEARKDVNPDEAVAIGAAIQGAVLSGDVKDVLLLDVTPLSLSIETMGGVSTPIIEKNTTIPTKKSQVFSTAEDNQTAVTIHVLQGERKQAQMNKSLGRFDLTGLPPAPRGVPQVEVTFDIDANGIMHVSAKDKATGKEQSIVIKASSGLSEDEIDKMVQDAEAHAAEDKKFEELAASRNQADALVHATQKTLKDAGDKVTAEEKVAIEAAIKELEEAIKGDDKEAIESRMQKLSEASSSMAQKMYAEQAAQQGGDAGAQAEDAAGKPADDAVDAEFEEVKDGDKK.

Position 198 is a phosphothreonine; by autocatalysis (Thr-198). Basic and acidic residues predominate over residues 578-589 (DDKEAIESRMQK). The interval 578-642 (DDKEAIESRM…FEEVKDGDKK (65 aa)) is disordered. Over residues 603–619 (AEQAAQQGGDAGAQAED) the composition is skewed to low complexity.

Belongs to the heat shock protein 70 family.

In terms of biological role, acts as a chaperone. The chain is Chaperone protein DnaK from Hahella chejuensis (strain KCTC 2396).